The sequence spans 518 residues: MLKKSRVLGKIPIPYLIKGSSCFYSTVVTSAPITLEDSLQSILSDIQDGSNIVTPNKPNTNLLTSKQPIKALKHLQWKTNLRVKKTTRLLKYSNEKLTPEDYSVFVNQLMDVYSKDIELLNKTEVWKSLYHIYRVFVVNAVDDGNAMVLYDLNQFVRMFINLNDLPLARNVFQLILKNSKNGEIPKDVQTICMYLRLYCGALSELWTTQTSRNFYQDLIGSLSGSNASSIRIPSHIAYPTIGVPQFQLLLRKLVEDPEYSKLRNTEMDSLIIQALGHYKEVPFLKQYISIFYGIDENVTITETHPGIKKLTPDSQLLKSVISAYGHNNNITSGMTVIGSFMEKYPEMNLDKSFWRTTIYWSLREWNKYKDSKGSQPKKAWNLMLNWYATIGKAVPFDQKIMLYRLSFLKSRKDHNAAIRDVQQVFKRIFIKTEKNTFIVERLVLYAYQRFIIKNLVNQNENAKCVDFINEWRIDFENGRYLERYFKELTHPKNESDEQKKLNDEDDDYNFPLFGTNIL.

Residues 1–15 (MLKKSRVLGKIPIPY) constitute a mitochondrion transit peptide.

The protein belongs to the AEP2 family. Binds to the 5'UTR of the OLI1 mRNA.

It localises to the mitochondrion. Its function is as follows. Required for translation of the mitochondrial OLI1 transcript coding for the mitochondrial ATP synthase subunit 9. This Kluyveromyces lactis (strain ATCC 8585 / CBS 2359 / DSM 70799 / NBRC 1267 / NRRL Y-1140 / WM37) (Yeast) protein is ATPase expression protein 2, mitochondrial (AEP2).